Here is an 82-residue protein sequence, read N- to C-terminus: Hepcidin (82 aa).

The N-terminal stretch at methionine 1–glycine 23 is a signal peptide. Positions serine 24–glutamine 53 are excised as a propeptide. Cystine bridges form between cysteine 64–cysteine 80, cysteine 67–cysteine 70, cysteine 68–cysteine 76, and cysteine 71–cysteine 79.

The protein belongs to the hepcidin family. In terms of assembly, interacts with SLC40A1; this interaction promotes SLC40A1 rapid ubiquitination.

It localises to the secreted. Its function is as follows. Liver-produced hormone that constitutes the main circulating regulator of iron absorption and distribution across tissues. Acts by promoting endocytosis and degradation of ferroportin/SLC40A1, leading to the retention of iron in iron-exporting cells and decreased flow of iron into plasma. Controls the major flows of iron into plasma: absorption of dietary iron in the intestine, recycling of iron by macrophages, which phagocytose old erythrocytes and other cells, and mobilization of stored iron from hepatocytes. Has strong antimicrobial activity against E.coli ML35P N.cinerea and weaker against S.epidermidis, S.aureus and group b streptococcus bacteria. Active against the fungus C.albicans. No activity against P.aeruginosa. The protein is Hepcidin (HAMP) of Sus scrofa (Pig).